Here is an 841-residue protein sequence, read N- to C-terminus: Transcription regulator protein BACH2 (841 aa).

One can recognise a BTB domain in the interval 37–103 (CDVTLIVERK…AYTAKLLLSR (67 aa)). Disordered regions lie at residues 153–173 (HEDC…TMDS), 204–226 (EALL…DALT), and 246–329 (SSHS…AACL). The segment covering 160–172 (AGEEEDEEEETMD) has biased composition (acidic residues). Composition is skewed to basic and acidic residues over residues 214-224 (TDTKESSEKDA) and 298-313 (PDAK…DRKQ). A Phosphoserine modification is found at S315. Residues K382 and K421 each participate in a glycyl lysine isopeptide (Lys-Gly) (interchain with G-Cter in SUMO2) cross-link. Position 521 is a phosphoserine; by RPS6KB1 (S521). The tract at residues 583-610 (QSYGTNSSDESGSFSEADSESCPVQDRG) is disordered. Over residues 584–598 (SYGTNSSDESGSFSE) the composition is skewed to polar residues. In terms of domain architecture, bZIP spans 646–709 (FIHDVRRRSK…GELLDNFSCL (64 aa)). A basic motif region spans residues 651–667 (RRRSKNRIAAQRCRKRK). The segment at 671-678 (IQNLECEI) is leucine-zipper. Residues 777 to 816 (PGPPWAPSNTSENCTSGRRLEGTDPGTFSERGPPLEPRSQ) are disordered. Residues 821 to 841 (DFCQEMTDKCTTDEQPRKDYT) carry the Nuclear export signal motif.

This sequence belongs to the bZIP family. CNC subfamily. As to quaternary structure, homodimer; disulfide-linked. Heterodimer of BACH2 and Maf-related transcription factors. Post-translationally, phosphorylation at Ser-521 downstream of the PI-3K pathway promotes nuclear export. In terms of processing, the reversible disulfide bond may provide a mechanism to regulate the activity in oxidative stress responses. B-cell specific.

The protein resides in the cytoplasm. The protein localises to the nucleus. Functionally, transcriptional regulator that acts as a repressor or activator. Binds to Maf recognition elements (MARE). Plays an important role in coordinating transcription activation and repression by MAFK. Induces apoptosis in response to oxidative stress through repression of the antiapoptotic factor HMOX1. Positively regulates the nuclear import of actin. Is a key regulator of adaptive immunity, crucial for the maintenance of regulatory T-cell function and B-cell maturation. In Homo sapiens (Human), this protein is Transcription regulator protein BACH2 (BACH2).